A 159-amino-acid polypeptide reads, in one-letter code: Endoribonuclease YbeY (159 aa).

Residues His125, His129, and His135 each coordinate Zn(2+).

The protein belongs to the endoribonuclease YbeY family. Zn(2+) serves as cofactor.

It is found in the cytoplasm. Functionally, single strand-specific metallo-endoribonuclease involved in late-stage 70S ribosome quality control and in maturation of the 3' terminus of the 16S rRNA. This is Endoribonuclease YbeY from Lactiplantibacillus plantarum (strain ATCC BAA-793 / NCIMB 8826 / WCFS1) (Lactobacillus plantarum).